The following is a 761-amino-acid chain: Ribonucleoside-diphosphate reductase subunit alpha (761 aa).

An ATP-cone domain is found at 5 to 95 (LFVTKRNGKI…IFHLRKKAFG (91 aa)). ATP-binding positions include lysine 9, 15–21 (ELINLDK), threonine 55, and lysine 91. Threonine 209 contacts GDP. A disulfide bridge connects residues cysteine 225 and cysteine 462. DTTP contacts are provided by residues 232-234 (DNL), arginine 262, and arginine 269. Asparagine 437 provides a ligand contact to GDP. Residue asparagine 437 is the Proton acceptor of the active site. Cysteine 439 (cysteine radical intermediate) is an active-site residue. Residues glutamate 441 and 623-625 (ETS) contribute to the GDP site. Catalysis depends on glutamate 441, which acts as the Proton acceptor.

The protein belongs to the ribonucleoside diphosphate reductase large chain family. As to quaternary structure, tetramer of two alpha and two beta subunits.

It catalyses the reaction a 2'-deoxyribonucleoside 5'-diphosphate + [thioredoxin]-disulfide + H2O = a ribonucleoside 5'-diphosphate + [thioredoxin]-dithiol. Its activity is regulated as follows. Under complex allosteric control mediated by deoxynucleoside triphosphates and ATP binding to separate specificity and activation sites on the alpha subunit. The type of nucleotide bound at the specificity site determines substrate preference. It seems probable that ATP makes the enzyme reduce CDP and UDP, dGTP favors ADP reduction and dTTP favors GDP reduction. Stimulated by ATP and inhibited by dATP binding to the activity site. Functionally, provides the precursors necessary for DNA synthesis. Catalyzes the biosynthesis of deoxyribonucleotides from the corresponding ribonucleotides. This chain is Ribonucleoside-diphosphate reductase subunit alpha (nrdA), found in Buchnera aphidicola subsp. Baizongia pistaciae (strain Bp).